The following is a 363-amino-acid chain: Protein arginine N-methyltransferase 2 (363 aa).

ANK repeat units lie at residues 22–46 (AAQT…FQDD) and 48–80 (LGWS…AVDK). Residues 111-363 (KTSAGDNLVF…RLPIAKMSLI (253 aa)) form the RMT2 domain. S-adenosyl-L-methionine is bound by residues Phe120, 186–191 (FGLGIV), 209–211 (EAH), 236–237 (WQ), and Asp265.

Belongs to the class I-like SAM-binding methyltransferase superfamily. RMT2 methyltransferase family. As to quaternary structure, monomer.

It localises to the cytoplasm. The protein resides in the nucleus. In terms of biological role, S-adenosyl-L-methionine-dependent protein-arginine N-methyltransferase that methylates the delta-nitrogen atom of arginine residues to form N5-methylarginine (type IV) in target proteins. Monomethylates ribosomal protein L12. This chain is Protein arginine N-methyltransferase 2, found in Cryptococcus neoformans var. neoformans serotype D (strain B-3501A) (Filobasidiella neoformans).